The chain runs to 409 residues: N-acetylglucosamine-6-phosphate deacetylase (409 aa).

A divalent metal cation is bound at residue Glu143. Position 154 to 155 (154 to 155 (AH)) interacts with substrate. 2 residues coordinate a divalent metal cation: His211 and His232. Substrate-binding positions include 235 to 236 (NA), Arg243, and 269 to 272 (DGTH). Asp294 (proton donor/acceptor) is an active-site residue. 328–330 (LSG) serves as a coordination point for substrate.

Belongs to the metallo-dependent hydrolases superfamily. NagA family. A divalent metal cation serves as cofactor.

The catalysed reaction is N-acetyl-D-glucosamine 6-phosphate + H2O = D-glucosamine 6-phosphate + acetate. It functions in the pathway amino-sugar metabolism; N-acetylneuraminate degradation. Its function is as follows. Hydrolyzes the N-glycolyl group from N-glycolylglucosamine 6-phosphate (GlcNGc-6-P) in the N-glycolylneuraminic acid (Neu5Gc) degradation pathway. Although human is not able to catalyze formation of Neu5Gc due to the inactive CMAHP enzyme, Neu5Gc is present in food and must be degraded. This chain is N-acetylglucosamine-6-phosphate deacetylase (AMDHD2), found in Homo sapiens (Human).